The primary structure comprises 397 residues: MNWHFPFFILTTVTLYSVHSQFNSLSLEELGSNTGIQVFNQIIKSRPHENVVVSPHGIASILGMLQLGADGKTKKQLSTVMRYNVNGVGKVLKKINKAIVSKKNKDIVTVANAVFLRNGFKMEVPFAVRNKDVFQCEVQNVNFQDPASASESINFWVKNETRGMIDNLLSPNLIDGALTRLVLVNAVYFKGLWKSRFQPESTKKRTFVAGDGKSYQVPMLAQLSVFRSGSTRTPNGLWYNFIELPYHGESISMLIALPTESSTPLSAIIPHITTKTIDSWMNTMVPKRMQLVLPKFTAVAQTDLKEPLKALGITEMFEPSKANFTKITRSESLHVSHILQKAKIEVSEDGTKASAATTAILIARSSPPWFIVDRPFLFSIRHNPTGAILFLGQVNKP.

The signal sequence occupies residues 1–19; the sequence is MNWHFPFFILTTVTLYSVH. The N-linked (GlcNAc...) asparagine glycan is linked to Asn-159.

Belongs to the serpin family. As to expression, most abundant in seminal vesicles.

The protein localises to the secreted. It is found in the extracellular space. Its function is as follows. Serine protease inhibitor with activity toward thrombin, trypsin, and urokinase. Promotes neurite extension by inhibiting thrombin. Binds heparin. The chain is Glia-derived nexin (Serpine2) from Mus musculus (Mouse).